The chain runs to 202 residues: AYTLPPLDYAYTALEPHIDAQTMEIHHTKHHQTYINNVNAALEGTSFANEPVEALLQKLDSLPENLRGPVRNNGGGHANHSLFWKVLTPNGGGEPKGALADAIKSDIGGLDTFKEAFTKAALTRFGSGWAWLSVTPEKKLVVESTGNQDSPLSTGNTPILGLDVWEHAYYLKYQNRRPEYIGAFFNVVNWDEVSRRYQEALA.

Fe(3+) contacts are provided by His26, His80, Asp163, and His167. Mn(2+) is bound by residues His26, His80, Asp163, and His167.

It belongs to the iron/manganese superoxide dismutase family. As to quaternary structure, homodimer. Mn(2+) serves as cofactor. The cofactor is Fe(3+).

It catalyses the reaction 2 superoxide + 2 H(+) = H2O2 + O2. Functionally, destroys superoxide anion radicals which are normally produced within the cells and which are toxic to biological systems. Catalyzes the dismutation of superoxide anion radicals into O2 and H2O2 by successive reduction and oxidation of the transition metal ion at the active site. The polypeptide is Superoxide dismutase [Mn/Fe] (sodB) (Methylomonas sp. (strain J)).